We begin with the raw amino-acid sequence, 429 residues long: 3-phosphoshikimate 1-carboxyvinyltransferase (429 aa).

3 residues coordinate 3-phosphoshikimate: lysine 25, serine 26, and arginine 30. Lysine 25 serves as a coordination point for phosphoenolpyruvate. Residues glycine 99 and arginine 127 each coordinate phosphoenolpyruvate. Positions 173, 174, 175, 201, 317, 340, and 344 each coordinate 3-phosphoshikimate. Residue glutamine 175 coordinates phosphoenolpyruvate. The active-site Proton acceptor is aspartate 317. 3 residues coordinate phosphoenolpyruvate: arginine 348, arginine 390, and lysine 415.

It belongs to the EPSP synthase family. As to quaternary structure, monomer.

It localises to the cytoplasm. It catalyses the reaction 3-phosphoshikimate + phosphoenolpyruvate = 5-O-(1-carboxyvinyl)-3-phosphoshikimate + phosphate. The protein operates within metabolic intermediate biosynthesis; chorismate biosynthesis; chorismate from D-erythrose 4-phosphate and phosphoenolpyruvate: step 6/7. In terms of biological role, catalyzes the transfer of the enolpyruvyl moiety of phosphoenolpyruvate (PEP) to the 5-hydroxyl of shikimate-3-phosphate (S3P) to produce enolpyruvyl shikimate-3-phosphate and inorganic phosphate. The sequence is that of 3-phosphoshikimate 1-carboxyvinyltransferase from Pseudoalteromonas atlantica (strain T6c / ATCC BAA-1087).